A 260-amino-acid chain; its full sequence is Ribosomal RNA small subunit methyltransferase J (260 aa).

S-adenosyl-L-methionine-binding positions include 125-126 (ER) and Asp-179.

This sequence belongs to the methyltransferase superfamily. RsmJ family.

It localises to the cytoplasm. It catalyses the reaction guanosine(1516) in 16S rRNA + S-adenosyl-L-methionine = N(2)-methylguanosine(1516) in 16S rRNA + S-adenosyl-L-homocysteine + H(+). Specifically methylates the guanosine in position 1516 of 16S rRNA. The protein is Ribosomal RNA small subunit methyltransferase J of Pseudomonas entomophila (strain L48).